The chain runs to 292 residues: General transcription factor IIE subunit 2 (292 aa).

Met-1 bears the N-acetylmethionine mark. The disordered stretch occupies residues 17 to 64 (LSTPVVEKRAVPSESPSSSSSKKKKAKVEHGGSSGSKQNSDHNNGSFN). The span at 51-63 (GSKQNSDHNNGSF) shows a compositional bias: polar residues. The residue at position 62 (Ser-62) is a Phosphoserine. A DNA-binding region (TFIIE beta) is located at residues 67 to 147 (ALSGSSGYKF…YAFKPKYNLK (81 aa)). Residue Lys-75 is modified to N6-acetyllysine. The tract at residues 245–277 (SMQESGPKKVASIQRRKKPASQKKRRFKTHNEH) is disordered. Basic residues predominate over residues 258-272 (QRRKKPASQKKRRFK).

This sequence belongs to the TFIIE beta subunit family. Tetramer of two alpha and two beta chains. Interacts with FACT subunit SUPT16H. Interacts with ATF7IP. Interacts with SND1. Part of TBP-based Pol II pre-initiation complex (PIC), in which Pol II core assembles with general transcription factors and other specific initiation factors including GTF2E1, GTF2E2, GTF2F1, GTF2F2, TCEA1, ERCC2, ERCC3, GTF2H2, GTF2H3, GTF2H4, GTF2H5, GTF2A1, GTF2A2, GTF2B and TBP; this large multi-subunit PIC complex mediates DNA unwinding and targets Pol II core to the transcription start site where the first phosphodiester bond forms.

The protein resides in the nucleus. In terms of biological role, recruits TFIIH to the initiation complex and stimulates the RNA polymerase II C-terminal domain kinase and DNA-dependent ATPase activities of TFIIH. Both TFIIH and TFIIE are required for promoter clearance by RNA polymerase. The chain is General transcription factor IIE subunit 2 (Gtf2e2) from Mus musculus (Mouse).